The sequence spans 131 residues: Cystatin J (131 aa).

The first 18 residues, 1 to 18 (MHLYLCVLVCLSIGMANC), serve as a signal peptide directing secretion. A Cystatin domain is found at 35–109 (DEILLTGVEF…RMNLPTKCSF (75 aa)). The Secondary area of contact signature appears at 68-72 (QVVAG). Disulfide bonds link C86–C97 and C107–C128.

The protein belongs to the cystatin family.

It is found in the secreted. It localises to the nematocyst. Its function is as follows. This recombinant protein inhibits the C1 cysteine protease papain (Ki is below 0.5 nM). The protein is Cystatin J of Cyanea capillata (Lion's mane jellyfish).